Here is a 350-residue protein sequence, read N- to C-terminus: Glycerol-3-phosphate dehydrogenase [NAD(+)], cytoplasmic (350 aa).

Residues 11–16 (GSGNWG), Phe98, Lys121, and Ala155 contribute to the NAD(+) site. Lys121 is a substrate binding site. The active-site Proton acceptor is Lys206. Arg270 and Gln299 together coordinate NAD(+). 270–271 (RN) contacts substrate.

This sequence belongs to the NAD-dependent glycerol-3-phosphate dehydrogenase family. In terms of assembly, homodimer.

It localises to the cytoplasm. It carries out the reaction sn-glycerol 3-phosphate + NAD(+) = dihydroxyacetone phosphate + NADH + H(+). It functions in the pathway phospholipid metabolism; alpha-glycerophosphate cycle. This chain is Glycerol-3-phosphate dehydrogenase [NAD(+)], cytoplasmic (Gpdh1), found in Drosophila ezoana (Fruit fly).